The primary structure comprises 279 residues: MKTKTDFLKMKEQGEPITMLTAYDYPSAKLAEEAEVDMILVGDSLGMVVLGYDSTVPVTVEDMIHHTKAVRRGAKETFIVTDMPFMSYHVSLQDTMVNARRIVQESGAHALKVEGAGEVISTIHYLTNAGIPVVAHLGLTPQSVGVLGGYKVQGKDAESAKKLIEDAKKCEEAGAIALVLECVPMQLAELISEQLTIPTIGIGAGQKVDGQVLVYHDLISYGVNRVPKFVKQYTSVQEEIVRGISQYVAEVKTRQFPEEKHSFTMKEEECLALYGGKQS.

Positions 43 and 82 each coordinate Mg(2+). 3-methyl-2-oxobutanoate contacts are provided by residues 43–44, D82, and K112; that span reads DS. E114 is a binding site for Mg(2+). E181 serves as the catalytic Proton acceptor.

This sequence belongs to the PanB family. As to quaternary structure, homodecamer; pentamer of dimers. The cofactor is Mg(2+).

It localises to the cytoplasm. It carries out the reaction 3-methyl-2-oxobutanoate + (6R)-5,10-methylene-5,6,7,8-tetrahydrofolate + H2O = 2-dehydropantoate + (6S)-5,6,7,8-tetrahydrofolate. It participates in cofactor biosynthesis; (R)-pantothenate biosynthesis; (R)-pantoate from 3-methyl-2-oxobutanoate: step 1/2. In terms of biological role, catalyzes the reversible reaction in which hydroxymethyl group from 5,10-methylenetetrahydrofolate is transferred onto alpha-ketoisovalerate to form ketopantoate. The polypeptide is 3-methyl-2-oxobutanoate hydroxymethyltransferase (Bacillus anthracis (strain A0248)).